The primary structure comprises 1049 residues: MSTWSSMLADLKKRAEEAKRQVKKGYDVTKNGLQYGVSQAKLQALAAGKAVQKYGNKLVLVIPKEYDGSVGNGFFDLVKAAEELGIQVKYVNRNELEVAHKSLGTADQFLGLTERGLTLFAPQLDQFLQKHSKISNVVGSSTGDAVSKLAKSQTIISGIQSVLGTVLAGINLNEAIISGGSELELAEAGVSLASELVSNIAKGTTTIDAFTTQIQNFGKLAENAKGLGGVGRQLQNISGSALSKTGLGLDIISSLLSGVTRSFALRNKNASTSTKVAAGFELSNQVIGGITKAVSSYILAQRLRAGLSTTGPAAALIASSISLAISPLAFLRVADNFNRSKEIGEFAERFKKLGYDGDKLLSEFYHEAGTIDASITTISTALSAIAAGTAAASAGALVGAPITLLVTGITGLISGILEFSKQPMLDHVASKIGNKIDEWEKKYGKNYFENGYDARHKAFLEDSFSLLSSFNKQYETERAVLITQQRWDEYIGELAGITGKGDKLSSGKAYVDYFQEGKLLEKKPDDFSKVVFDPTKGEIDISNSQTSTLLKFVTPLLTPGTESRERTQTGKYEYITKLVVKGKDKWVVNGVKDKGAVYDYTNLIQHAHISSSVARGEEYREVRLVSHLGNGNDKVFLAAGSAEIHAGEGHDVVYYDKTDTGLLVIDGTKATEQGRYSVTRELSGATKILREVIKNQKYAVGKREETLEYRDYELTQSGNSNLKAHDELHSVEEIGSNQRDEFKGSKFRDIFHGADGDDLLNGNDGDDILYGDKGNDELRGDNGNDQLYGGEGDDKLLGGNGNNYLSGGDGNDELQVLGNGFNVLRGGKGDDKLYGSSGSDLLDGGEGNDYLEGGDGSDFYVYRSTSGNHTIYDQGKASDSDKLYLSDLSFDNILVKRVNDNLEFRSNNNSNSGVLTIKDWFKGGNSYNHKIEQIVDKNGRKLTAGNLGNNFHDTQQASSLLKNVTQEQNESNLSSLKTELGKIITNAGNFGVAKQGNTGINTAALNNEVNKIISSANTFATSQLGGSGMGTLPSTNVNSMMLGNLARAA.

Helical transmembrane passes span 154–170 (TIISGIQSVLGTVLAGI), 315–331 (ALIASSISLAISPLAFL), and 397–413 (LVGAPITLLVTGITGLI). Hemolysin-type calcium-binding repeat units lie at residues 743–760 (KGSKFRDIFHGADGDDLL), 761–778 (NGNDGDDILYGDKGNDEL), 779–796 (RGDNGNDQLYGGEGDDKL), 797–814 (LGGNGNNYLSGGDGNDEL), 825–842 (RGGKGDDKLYGSSGSDLL), and 843–860 (DGGEGNDYLEGGDGSDFY).

This sequence belongs to the RTX prokaryotic toxin (TC 1.C.11) family. Post-translationally, palmitoylated by ApxIIIC. The toxin only becomes active when modified.

The protein localises to the secreted. Its subcellular location is the host cell membrane. Its function is as follows. Does not have hemolytic activity but shows a strong cytotoxicity towards alveolar macrophages and neutrophils. The chain is RTX-III toxin determinant A from serotype 2 (apxIIIA) from Actinobacillus pleuropneumoniae (Haemophilus pleuropneumoniae).